We begin with the raw amino-acid sequence, 406 residues long: Transforming growth factor beta regulator 1 (406 aa).

Disordered stretches follow at residues methionine 1–serine 28 and serine 109–lysine 144. Serine 2 is modified (N-acetylserine). Threonine 13 carries the post-translational modification Phosphothreonine. Residues glutamate 134–lysine 144 are compositionally biased toward basic and acidic residues. Residues valine 177–glycine 236 enclose the FYR N-terminal domain. The region spanning glycine 237–lysine 316 is the FYR C-terminal domain.

The protein belongs to the TBRG1 family. As to quaternary structure, interacts with CDKN2A and MDM2. In terms of processing, ubiquitinated; mediated by MDM2 and leading to its subsequent proteasomal degradation.

The protein localises to the nucleus. In terms of biological role, acts as a growth inhibitor. Can activate p53/TP53, causes G1 arrest and collaborates with CDKN2A to restrict proliferation, but does not require either protein to inhibit DNA synthesis. Redistributes CDKN2A into the nucleoplasm. Involved in maintaining chromosomal stability. The sequence is that of Transforming growth factor beta regulator 1 (Tbrg1) from Mus musculus (Mouse).